The following is a 634-amino-acid chain: DNA-directed RNA polymerase subunit gamma (634 aa).

Zn(2+) contacts are provided by Cys74, Cys76, Cys89, and Cys92. Asp471, Asp473, and Asp475 together coordinate Mg(2+).

The protein belongs to the RNA polymerase beta' chain family. RpoC1 subfamily. In terms of assembly, in cyanobacteria the RNAP catalytic core is composed of 2 alpha, 1 beta, 1 beta', 1 gamma and 1 omega subunit. When a sigma factor is associated with the core the holoenzyme is formed, which can initiate transcription. It depends on Mg(2+) as a cofactor. Zn(2+) is required as a cofactor.

It catalyses the reaction RNA(n) + a ribonucleoside 5'-triphosphate = RNA(n+1) + diphosphate. DNA-dependent RNA polymerase catalyzes the transcription of DNA into RNA using the four ribonucleoside triphosphates as substrates. This Synechococcus sp. (strain WH7803) protein is DNA-directed RNA polymerase subunit gamma.